A 423-amino-acid polypeptide reads, in one-letter code: Transducer protein Htr13 (423 aa).

A compositionally biased stretch (polar residues) spans 1-19 (MTGPDNSLTDPSASPSTPV). Residues 1 to 21 (MTGPDNSLTDPSASPSTPVAS) are disordered. The Methyl-accepting transducer domain occupies 152–388 (AVAELIERAR…ELTMMIDEAA (237 aa)).

Belongs to the methyl-accepting chemotaxis (MCP) protein family. In terms of processing, methylated by CheR.

The protein localises to the cytoplasm. In terms of biological role, potentially involved in chemo- or phototactic signal transduction. The chain is Transducer protein Htr13 (htr13) from Halobacterium salinarum (strain ATCC 29341 / DSM 671 / R1).